The chain runs to 671 residues: Zinc finger protein 568 (671 aa).

Positions Met-1–Ser-31 are disordered. Residues Ser-18–Arg-29 are compositionally biased toward basic and acidic residues. KRAB domains follow at residues Val-34–Pro-105 and Leu-124–Pro-195. The segment at Glu-214–Lys-366 is disordered. Composition is skewed to basic and acidic residues over residues Glu-226–Leu-251, Ile-296–Gln-312, and Arg-329–Lys-341. 11 consecutive C2H2-type zinc fingers follow at residues His-363–His-385, Tyr-391–His-413, Phe-419–His-441, His-447–His-469, Phe-475–His-497, His-503–His-525, Tyr-531–His-553, Tyr-559–His-581, His-587–His-609, Tyr-615–His-637, and Tyr-643–His-665.

This sequence belongs to the krueppel C2H2-type zinc-finger protein family. As to quaternary structure, interacts with TRIM28. As to expression, little or no expression detected in most adult tissues (brain, liver, kidney, spleen, testis, ovary). In the hippocampus, detected in neural stem cells within the subventricular zone and subgranular zone.

It is found in the nucleus. Has transcriptional repression activity, partially through the recruitment of the corepressor TRIM28 but also has repression activity independently of this interaction. Essential during embryonic development, where it acts as direct repressor of IGF2-P0, placental-specific transcript of IGF2, in early development and regulates convergent extension movements required for axis elongation and tissue morphogenesis in all germ layers. Also important for normal morphogenesis of extraembryonic tissues including the yolk sac, extraembryonic mesoderm and placenta. May enhance proliferation or maintenance of neural stem cells. This is Zinc finger protein 568 from Mus musculus (Mouse).